The chain runs to 97 residues: Co-chaperonin GroES (97 aa).

Belongs to the GroES chaperonin family. As to quaternary structure, heptamer of 7 subunits arranged in a ring. Interacts with the chaperonin GroEL.

The protein localises to the cytoplasm. In terms of biological role, together with the chaperonin GroEL, plays an essential role in assisting protein folding. The GroEL-GroES system forms a nano-cage that allows encapsulation of the non-native substrate proteins and provides a physical environment optimized to promote and accelerate protein folding. GroES binds to the apical surface of the GroEL ring, thereby capping the opening of the GroEL channel. This Stutzerimonas stutzeri (strain A1501) (Pseudomonas stutzeri) protein is Co-chaperonin GroES.